The sequence spans 529 residues: Peptide chain release factor 3 (529 aa).

The tr-type G domain occupies 11–280; the sequence is AKRRTFAIIS…GLVEWAPAPM (270 aa). Residues 20–27, 88–92, and 142–145 contribute to the GTP site; these read SHPDAGKT, DTPGH, and NKLD.

It belongs to the TRAFAC class translation factor GTPase superfamily. Classic translation factor GTPase family. PrfC subfamily.

The protein resides in the cytoplasm. Its function is as follows. Increases the formation of ribosomal termination complexes and stimulates activities of RF-1 and RF-2. It binds guanine nucleotides and has strong preference for UGA stop codons. It may interact directly with the ribosome. The stimulation of RF-1 and RF-2 is significantly reduced by GTP and GDP, but not by GMP. This chain is Peptide chain release factor 3, found in Shigella boydii serotype 18 (strain CDC 3083-94 / BS512).